We begin with the raw amino-acid sequence, 929 residues long: Isoleucine--tRNA ligase (929 aa).

A 'HIGH' region motif is present at residues 58 to 68 (PYANGDIHIGH). Position 568 (E568) interacts with L-isoleucyl-5'-AMP. The 'KMSKS' region motif lies at 609–613 (KMSKS). K612 serves as a coordination point for ATP. Zn(2+)-binding residues include C892, C895, C912, and C915.

The protein belongs to the class-I aminoacyl-tRNA synthetase family. IleS type 1 subfamily. As to quaternary structure, monomer. Zn(2+) serves as cofactor.

Its subcellular location is the cytoplasm. It catalyses the reaction tRNA(Ile) + L-isoleucine + ATP = L-isoleucyl-tRNA(Ile) + AMP + diphosphate. Functionally, catalyzes the attachment of isoleucine to tRNA(Ile). As IleRS can inadvertently accommodate and process structurally similar amino acids such as valine, to avoid such errors it has two additional distinct tRNA(Ile)-dependent editing activities. One activity is designated as 'pretransfer' editing and involves the hydrolysis of activated Val-AMP. The other activity is designated 'posttransfer' editing and involves deacylation of mischarged Val-tRNA(Ile). This chain is Isoleucine--tRNA ligase, found in Thiobacillus denitrificans (strain ATCC 25259 / T1).